A 562-amino-acid chain; its full sequence is Phosphoglucomutase-1 (562 aa).

Residue Met1 is modified to N-acetylmethionine. Lys16 is subject to N6-acetyllysine. Arg23 contacts alpha-D-glucose 1,6-bisphosphate. Position 115 is a phosphothreonine (Thr115). Residue Ser117 participates in alpha-D-glucose 1,6-bisphosphate binding. The active-site Phosphoserine intermediate is Ser117. Mg(2+) is bound at residue Ser117. A phosphoserine mark is found at Ser117 and Ser134. A Phosphothreonine modification is found at Thr185. Phosphoserine occurs at positions 201, 206, and 213. Mg(2+) is bound by residues Asp288, Asp290, and Asp292. Alpha-D-glucose 1,6-bisphosphate-binding residues include Asp292 and Arg293. Lys349 carries the post-translational modification N6-acetyllysine. Position 353 is a phosphotyrosine (Tyr353). Thr357 is a binding site for alpha-D-glucose 1,6-bisphosphate. At Ser369 the chain carries Phosphoserine. Alpha-D-glucose 1,6-bisphosphate-binding residues include Glu376, Ser378, and Lys389. At Ser378 the chain carries Phosphoserine. Lys419 bears the N6-succinyllysine mark. Thr467 carries the post-translational modification Phosphothreonine; by PAK1. 3 positions are modified to phosphoserine: Ser477, Ser485, and Ser505. Thr507 carries the post-translational modification Phosphothreonine. Phosphoserine is present on residues Ser509 and Ser541.

The protein belongs to the phosphohexose mutase family. Monomer. Requires Mg(2+) as cofactor. Phosphorylation at Thr-467 by PAK1 significantly enhances enzymatic activity.

It localises to the cytoplasm. The enzyme catalyses alpha-D-glucose 1-phosphate = alpha-D-glucose 6-phosphate. It carries out the reaction O-phospho-L-seryl-[protein] + alpha-D-glucose 1-phosphate = alpha-D-glucose 1,6-bisphosphate + L-seryl-[protein]. It catalyses the reaction alpha-D-glucose 1,6-bisphosphate + L-seryl-[protein] = O-phospho-L-seryl-[protein] + alpha-D-glucose 6-phosphate. Glucose-1,6-bisphosphate enhances phosphorylation of the active site Ser-117, and thereby increases enzyme activity. In terms of biological role, catalyzes the reversible isomerization of alpha-D-glucose 1-phosphate to alpha-D-glucose 6-phosphate. The mechanism proceeds via the intermediate compound alpha-D-glucose 1,6-bisphosphate. This enzyme participates in both the breakdown and synthesis of glucose. In Homo sapiens (Human), this protein is Phosphoglucomutase-1 (PGM1).